The primary structure comprises 366 residues: Isocitrate dehydrogenase [NAD] subunit alpha, mitochondrial (366 aa).

Residues 1–27 (MAGPAWISKVSRLLGAFHNPKQVTRGF) constitute a mitochondrion transit peptide. Residue Lys-77 is modified to N6-succinyllysine. A Phosphothreonine modification is found at Thr-101. Residues Arg-115, Arg-125, and Arg-146 each coordinate substrate. Residue Lys-223 is modified to N6-acetyllysine. Mg(2+) contacts are provided by Asp-233, Asp-257, and Asp-261. N6-acetyllysine; alternate is present on Lys-343. An N6-succinyllysine; alternate modification is found at Lys-343. Lys-350 carries the N6-succinyllysine modification.

Belongs to the isocitrate and isopropylmalate dehydrogenases family. As to quaternary structure, heterooligomer of subunits alpha (IDH3A), beta (IDH3B), and gamma (IDH3G) in the apparent ratio of 2:1:1. The heterodimer containing one IDH3A and one IDH3B subunit and the heterodimer containing one IDH3A and one IDH3G subunit assemble into a heterotetramer (which contains two subunits of IDH3A, one of IDH3B and one of IDH3G) and further into the heterooctamer. It depends on Mg(2+) as a cofactor. The cofactor is Mn(2+).

The protein localises to the mitochondrion. The enzyme catalyses D-threo-isocitrate + NAD(+) = 2-oxoglutarate + CO2 + NADH. With respect to regulation, the heterotetramer and the heterodimer composed of IDH3A and IDH3G subunits can be allosterically activated by citrate (CIT) or/and ADP, and the two activators can act independently or synergistically. The heterodimer composed of IDH3A and IDH3B subunits cannot be allosterically regulated and the allosteric regulation of the heterotetramer is through the IDH3G subunit and not the IDH3B subunit. The IDH3G subunit contains the allosteric site which consists of a CIT-binding site and an ADP-binding site, and the binding of CIT and ADP causes conformational changes at the allosteric site which are transmitted to the active site in the catalytic subunit (IDH3A) through a cascade of conformational changes at the heterodimer interface, leading to stabilization of the isocitrate-binding at the active site and thus activation of the enzyme. ATP can activate the heterotetramer and the heterodimer composed of IDH3A and IDH3G subunits at low concentrations but inhibits their activities at high concentrations, whereas ATP exhibits only inhibitory effect on the heterodimer composed of IDH3A and IDH3B subunits. In terms of biological role, catalytic subunit of the enzyme which catalyzes the decarboxylation of isocitrate (ICT) into alpha-ketoglutarate. The heterodimer composed of the alpha (IDH3A) and beta (IDH3B) subunits and the heterodimer composed of the alpha (IDH3A) and gamma (IDH3G) subunits, have considerable basal activity but the full activity of the heterotetramer (containing two subunits of IDH3A, one of IDH3B and one of IDH3G) requires the assembly and cooperative function of both heterodimers. The chain is Isocitrate dehydrogenase [NAD] subunit alpha, mitochondrial from Homo sapiens (Human).